A 216-amino-acid chain; its full sequence is Ras-related protein Rab-2B (216 aa).

Residues Gly16, Val17, Gly18, Lys19, Ser20, and Cys21 each coordinate GDP. Gly16, Val17, Gly18, Lys19, Ser20, Cys21, and Thr38 together coordinate GTP. Ser20 provides a ligand contact to Mg(2+). The Switch 1 signature appears at 37–42; that stretch reads LTIGVE. Residues Thr38 and Asp61 each contribute to the Mg(2+) site. The short motif at 63 to 72 is the Switch 2 element; that stretch reads AGQESFRSIT. Residues Gly64, Asn119, Lys120, Asp122, Ala150, and Lys151 each contribute to the GTP site. Asn119 is a GDP binding site. GDP is bound by residues Asp122, Ala150, and Lys151. The interval 189–216 is disordered; that stretch reads PQQSISTSVGPSASQRNSRDIGSNSGCC. Ser202 bears the Phosphoserine mark. Residues Cys215 and Cys216 are each lipidated (S-geranylgeranyl cysteine).

Belongs to the small GTPase superfamily. Rab family. In terms of assembly, interacts (in GTP-bound form) with GARIN4 (via N-terminus). Interacts (in GTP-bound form) with GARIN5A. Interacts (in GTP-bound form) with GARIN1B. Interacts with VPS39 and VPS41. Mg(2+) is required as a cofactor. In terms of tissue distribution, expressed in kidney, prostate, lung, liver, thymus, colon, pancreas, and skeletal muscle, and low levels in placenta. Not detected in heart, brain, spleen, testis, ovary, small intestine and leukocyte.

It is found in the cell membrane. It localises to the endoplasmic reticulum membrane. The protein localises to the golgi apparatus membrane. Its subcellular location is the cytoplasmic vesicle. The protein resides in the secretory vesicle. It is found in the acrosome. It localises to the autophagosome membrane. It catalyses the reaction GTP + H2O = GDP + phosphate + H(+). With respect to regulation, regulated by guanine nucleotide exchange factors (GEFs) which promote the exchange of bound GDP for free GTP, GTPase activating proteins (GAPs) which increase the GTP hydrolysis activity, and GDP dissociation inhibitors (GDIs) which inhibit the dissociation of the nucleotide from the GTPase. In terms of biological role, the small GTPases Rab are key regulators of intracellular membrane trafficking, from the formation of transport vesicles to their fusion with membranes. Rabs cycle between active GTP-bound and inactive GDP-bound states. In their active state, drive transport of vesicular carriers from donor organelles to acceptor organelles to regulate the membrane traffic that maintains organelle identity and morphology. Regulates the compacted morphology of the Golgi. Promotes cytosolic DNA-induced innate immune responses. Regulates IFN responses against DNA viruses by regulating the CGAS-STING signaling axis. Together with RAB2A redundantly required for efficient autophagic flux. The chain is Ras-related protein Rab-2B from Homo sapiens (Human).